Here is a 200-residue protein sequence, read N- to C-terminus: Probable fatty acid desaturase MIMI_L630 (200 aa).

2 consecutive transmembrane segments (helical) span residues 9–29 and 79–99; these read FIQIVLGYLLSDFIMGIYHWI and IGPLFFWFGLTPFLVTMFIMI.

The protein belongs to the fatty acid desaturase CarF family.

It localises to the membrane. The protein is Probable fatty acid desaturase MIMI_L630 of Acanthamoeba polyphaga mimivirus (APMV).